We begin with the raw amino-acid sequence, 312 residues long: Putative B3 domain-containing protein Os10g0537100 (312 aa).

Residues 35 to 153 (FEKVVTPSDV…RLFIDFRRRR (119 aa)) constitute a DNA-binding region (TF-B3). 2 disordered regions span residues 161 to 182 (FPPTAAPPSHSHHHHQRHHPPL) and 286 to 312 (LLQLPSPSSSTSSSTAGKKMCSLDLGL). Residues 170–180 (HSHHHHQRHHP) are compositionally biased toward basic residues. Over residues 286–301 (LLQLPSPSSSTSSSTA) the composition is skewed to low complexity.

Its subcellular location is the nucleus. The protein is Putative B3 domain-containing protein Os10g0537100 of Oryza sativa subsp. japonica (Rice).